The sequence spans 117 residues: UPF0375 protein Y45F10C.2 (117 aa).

The N-terminal stretch at 1–20 is a signal peptide; sequence MNSFVSTVLLLSVTIALVSG.

Belongs to the UPF0375 family. In terms of tissue distribution, expressed in the uterine epithelium.

Its subcellular location is the secreted. Negatively regulates the egg-laying rate by promoting retention of fertilized eggs. This Caenorhabditis elegans protein is UPF0375 protein Y45F10C.2.